The primary structure comprises 129 residues: Small ribosomal subunit protein uS8my (129 aa).

This sequence belongs to the universal ribosomal protein uS8 family. Component of the mitochondrial ribosome small subunit.

It is found in the mitochondrion. This is Small ribosomal subunit protein uS8my (RPS15AE) from Arabidopsis thaliana (Mouse-ear cress).